Reading from the N-terminus, the 256-residue chain is MTTLLTLQDVCVVFDDRHVIDNVSLSIESNKIITLIGPNGAGKSTLVKTILGLQKPTSGTIKKEKKLRIGYVPQKLHLNDSLPLSVHGFLKLAGKYSQQEHLSALKLVEAEHLLNSNMHKLSGGESQRVLLARALLQRPDLLVLDEPAQGVDVQGQISLYALIESIRHRFNCAVFMVSHDLHLVMAKTDEVICLQHHICCSGAPESISKHPKYIALFGQQRDQQLAFYHHEHHHNHDLSGEPSDGSCCSKNKKAHQ.

An ABC transporter domain is found at 5 to 220 (LTLQDVCVVF…PKYIALFGQQ (216 aa)). 37-44 (GPNGAGKS) provides a ligand contact to ATP. Positions 232–256 (HHHNHDLSGEPSDGSCCSKNKKAHQ) are disordered.

Belongs to the ABC transporter superfamily. Zinc importer (TC 3.A.1.15.5) family. As to quaternary structure, the complex is composed of two ATP-binding proteins (ZnuC), two transmembrane proteins (ZnuB) and a solute-binding protein (ZnuA).

It localises to the cell inner membrane. The catalysed reaction is Zn(2+)(out) + ATP(in) + H2O(in) = Zn(2+)(in) + ADP(in) + phosphate(in) + H(+)(in). Its function is as follows. Part of the ABC transporter complex ZnuABC involved in zinc import. Responsible for energy coupling to the transport system. This is Zinc import ATP-binding protein ZnuC 1 from Aliivibrio fischeri (strain ATCC 700601 / ES114) (Vibrio fischeri).